We begin with the raw amino-acid sequence, 310 residues long: Beta-ketoacyl-[acyl-carrier-protein] synthase III (310 aa).

Active-site residues include Cys-112 and His-235. The segment at 236 to 240 is ACP-binding; sequence QANIR. Asn-265 is an active-site residue.

It belongs to the thiolase-like superfamily. FabH family. In terms of assembly, homodimer.

The protein resides in the cytoplasm. The catalysed reaction is malonyl-[ACP] + acetyl-CoA + H(+) = 3-oxobutanoyl-[ACP] + CO2 + CoA. The protein operates within lipid metabolism; fatty acid biosynthesis. In terms of biological role, catalyzes the condensation reaction of fatty acid synthesis by the addition to an acyl acceptor of two carbons from malonyl-ACP. Catalyzes the first condensation reaction which initiates fatty acid synthesis and may therefore play a role in governing the total rate of fatty acid production. Possesses both acetoacetyl-ACP synthase and acetyl transacylase activities. Its substrate specificity determines the biosynthesis of branched-chain and/or straight-chain of fatty acids. The chain is Beta-ketoacyl-[acyl-carrier-protein] synthase III from Geobacillus kaustophilus (strain HTA426).